Reading from the N-terminus, the 229-residue chain is Flagellar L-ring protein (229 aa).

Positions 1 to 20 (MLKTVLRLPVCAALLALAAG) are cleaved as a signal peptide. The N-palmitoyl cysteine moiety is linked to residue cysteine 21. The S-diacylglycerol cysteine moiety is linked to residue cysteine 21.

This sequence belongs to the FlgH family. As to quaternary structure, the basal body constitutes a major portion of the flagellar organelle and consists of four rings (L,P,S, and M) mounted on a central rod.

It localises to the cell outer membrane. It is found in the bacterial flagellum basal body. Its function is as follows. Assembles around the rod to form the L-ring and probably protects the motor/basal body from shearing forces during rotation. The chain is Flagellar L-ring protein from Bordetella pertussis (strain Tohama I / ATCC BAA-589 / NCTC 13251).